Consider the following 75-residue polypeptide: Large ribosomal subunit protein bL32c (75 aa).

Positions 49-75 are disordered; sequence SPGPTTPIKPNPKKQTGRRPRSQRRRT. A compositionally biased stretch (basic residues) spans 59–75; the sequence is NPKKQTGRRPRSQRRRT.

This sequence belongs to the bacterial ribosomal protein bL32 family.

The protein resides in the plastid. The protein localises to the chloroplast. The protein is Large ribosomal subunit protein bL32c of Nephroselmis olivacea (Green alga).